Consider the following 298-residue polypeptide: Acetyl-coenzyme A carboxylase carboxyl transferase subunit beta 1 (298 aa).

Residues 26–294 (MWVKCPSCGD…RAADVQNAPA (269 aa)) enclose the CoA carboxyltransferase N-terminal domain. The Zn(2+) site is built by C30, C33, C49, and C51. The C4-type zinc finger occupies 30 to 51 (CPSCGDLIYTRQFSDNLKVCKC).

It belongs to the AccD/PCCB family. Acetyl-CoA carboxylase is a heterohexamer composed of biotin carboxyl carrier protein (AccB), biotin carboxylase (AccC) and two subunits each of ACCase subunit alpha (AccA) and ACCase subunit beta (AccD). Zn(2+) serves as cofactor.

The protein localises to the cytoplasm. The enzyme catalyses N(6)-carboxybiotinyl-L-lysyl-[protein] + acetyl-CoA = N(6)-biotinyl-L-lysyl-[protein] + malonyl-CoA. Its pathway is lipid metabolism; malonyl-CoA biosynthesis; malonyl-CoA from acetyl-CoA: step 1/1. Component of the acetyl coenzyme A carboxylase (ACC) complex. Biotin carboxylase (BC) catalyzes the carboxylation of biotin on its carrier protein (BCCP) and then the CO(2) group is transferred by the transcarboxylase to acetyl-CoA to form malonyl-CoA. The sequence is that of Acetyl-coenzyme A carboxylase carboxyl transferase subunit beta 1 from Roseiflexus castenholzii (strain DSM 13941 / HLO8).